We begin with the raw amino-acid sequence, 519 residues long: Amphoterin-induced protein 2 (519 aa).

Positions 1–38 are cleaved as a signal peptide; it reads MSLRFHTLPTLPRAVKPGCRELLCLLVIAVMVSPSASG. In terms of domain architecture, LRRNT spans 39 to 67; sequence MCPTACICATDIVSCTNKNLSKVPGNLFR. The Extracellular segment spans residues 39 to 397; the sequence is MCPTACICAT…RSHAHEAFNT (359 aa). 2 cysteine pairs are disulfide-bonded: Cys40-Cys46 and Cys44-Cys53. N-linked (GlcNAc...) asparagine glycosylation is present at Asn57. LRR repeat units lie at residues 68–89, 93–114, 117–138, 141–162, 165–186, and 192–213; these read LIKRLDLSYNRIGLLDADWIPV, KLSTLILRHNNITSISTGSFST, NLKCLDLSSNRLKSVKSATFQE, ALEVLLLYNNHISYLDPAAFGG, HLQKLYLSGNFLTQFPMDLYTG, and DLTFLDVSYNRIPSIPMHHINL. N-linked (GlcNAc...) asparagine glycosylation is present at Asn103. An LRRCT domain is found at 227–283; it reads NPFVCDCSLYSLLIFWYRRHFSSVMDFKNDYTCRLWSDSRHSHQLQLLQESFLNCSY. 2 disulfides stabilise this stretch: Cys231–Cys259 and Cys233–Cys281. 7 N-linked (GlcNAc...) asparagine glycosylation sites follow: Asn280, Asn287, Asn344, Asn372, Asn380, Asn383, and Asn387. The 91-residue stretch at 288–378 folds into the Ig-like C2-type domain; sequence GSFHALGFIH…RLLNETVDIM (91 aa). Cys309 and Cys362 are oxidised to a cystine. Residues 398–418 traverse the membrane as a helical segment; it reads AFTTLAACVASIVLVLLYLYL. At 419-519 the chain is on the cytoplasmic side; the sequence is TPCPCKCKAK…FSDTPFVAST (101 aa). The disordered stretch occupies residues 498-519; it reads RAKSDSDSVNSVFSDTPFVAST.

This sequence belongs to the immunoglobulin superfamily. AMIGO family. Binds itself as well as AMIGO1 and AMIGO3. Highest level in cerebellum, retina, liver, and lung. Lower levels in cerebrum, kidney, small intestine, spleen and testis.

Its subcellular location is the cell membrane. It is found in the nucleus. Required for depolarization-dependent survival of cultured cerebellar granule neurons. May mediate homophilic as well as heterophilic cell-cell interaction with AMIGO1 or AMIGO3. May contribute to signal transduction through its intracellular domain. This Mus musculus (Mouse) protein is Amphoterin-induced protein 2.